We begin with the raw amino-acid sequence, 44 residues long: MMKRLLGLVMLLLFTCTLLTGCNTARGFGEDIKHLGNSISHAAS.

The N-terminal stretch at 1–21 is a signal peptide; the sequence is MMKRLLGLVMLLLFTCTLLTG. A lipid anchor (N-palmitoyl cysteine) is attached at C22. C22 carries S-diacylglycerol cysteine lipidation.

Belongs to the EcnA/EcnB lipoprotein family.

It localises to the cell membrane. Acts as antidote to the effect of entericidin B. The polypeptide is Entericidin A (ecnA) (Citrobacter freundii).